The following is a 280-amino-acid chain: uncharacterized protein (280 aa).

3 disordered regions span residues 20–41 (DVKKSQQQQQQQPQAPPQQQQQ), 170–199 (INSPPPPQEEEKPQLSKKEEPEWLKGKDKA), and 251–280 (GNSKPYTSSNATNKPFTTASKSTNSYSFSF). Positions 25-41 (QQQQQQQPQAPPQQQQQ) are enriched in low complexity. Positions 178–199 (EEEKPQLSKKEEPEWLKGKDKA) are enriched in basic and acidic residues.

This is an uncharacterized protein from Dictyostelium discoideum (Social amoeba).